The following is a 213-amino-acid chain: Imidazole glycerol phosphate synthase subunit HisH (213 aa).

The region spanning 1 to 212 (MLAILDYKAG…HRYCTEAADA (212 aa)) is the Glutamine amidotransferase type-1 domain. The active-site Nucleophile is the C79. Catalysis depends on residues H187 and E189.

In terms of assembly, heterodimer of HisH and HisF.

The protein localises to the cytoplasm. The enzyme catalyses 5-[(5-phospho-1-deoxy-D-ribulos-1-ylimino)methylamino]-1-(5-phospho-beta-D-ribosyl)imidazole-4-carboxamide + L-glutamine = D-erythro-1-(imidazol-4-yl)glycerol 3-phosphate + 5-amino-1-(5-phospho-beta-D-ribosyl)imidazole-4-carboxamide + L-glutamate + H(+). It catalyses the reaction L-glutamine + H2O = L-glutamate + NH4(+). The protein operates within amino-acid biosynthesis; L-histidine biosynthesis; L-histidine from 5-phospho-alpha-D-ribose 1-diphosphate: step 5/9. Its function is as follows. IGPS catalyzes the conversion of PRFAR and glutamine to IGP, AICAR and glutamate. The HisH subunit catalyzes the hydrolysis of glutamine to glutamate and ammonia as part of the synthesis of IGP and AICAR. The resulting ammonia molecule is channeled to the active site of HisF. In Nitratidesulfovibrio vulgaris (strain DP4) (Desulfovibrio vulgaris), this protein is Imidazole glycerol phosphate synthase subunit HisH.